Here is a 153-residue protein sequence, read N- to C-terminus: Large ribosomal subunit protein uL22 (153 aa).

This sequence belongs to the universal ribosomal protein uL22 family. Part of the 50S ribosomal subunit.

Its function is as follows. This protein binds specifically to 23S rRNA. It makes multiple contacts with different domains of the 23S rRNA in the assembled 50S subunit and ribosome. Functionally, the globular domain of the protein is located near the polypeptide exit tunnel on the outside of the subunit, while an extended beta-hairpin is found that lines the wall of the exit tunnel in the center of the 70S ribosome. The sequence is that of Large ribosomal subunit protein uL22 from Methanococcus vannielii (strain ATCC 35089 / DSM 1224 / JCM 13029 / OCM 148 / SB).